A 1184-amino-acid chain; its full sequence is MSGHSGHDVKYGRHRTRRSFARISEVLELPNLIEIQTASYQWFLDEGLREMFRDISPIEDFAGNLSLEFIDYDLGEPKYSVEESKNRDANYAAPLRVKLRLINKETGEVKDQEVFMGDFPLMTEMGTFIINGAERVIVSQLVRSPGVYFNGKLDKNGKKGFGSTVIPNRGAWLEYETDAKDVVHVRIDRTRKLPVTVLLRALGFGSDQEIIDLIGDNDYLRNTLEKDNTDNAEKALLEIYERLRPGEPPTVDNARSLLVSRFFDPKRYDLASVGRYKINKKLHLKNRLFNQTLAETLVDPETGEIIASKGDILDRRNLDQIIPNLENGVGFRTLRPTDGVMEDSVLVQSIKIYAPNDDEKEINIIGNAYIEENVKHITPSDIISSISYFFNLLHGVGDTDDIDHLGNRRLRSVGELLQNQFRIGLSRMERVVRERMSIQDMTTITPQQLINIRPVVASIKEFFGSSQLSQFMDQTNPLGELTHKRRLSALGPGGLTRERAGYEVRDVHYSHYGRMCPIETPEGPNIGLINSLSSFAKVNKFGFIETPYRRVDPETNRVTDKIDYLTADEEDNYVVAQANSKLDEQGTFTEEEVMARFRSENLAVEKERIDYMDVSPKQVVSVATACIPFLENDDSNRALMGANMQRQAVPLMHPEAPFVGTGMEHVSAKDSGAAVTAKHDGIVEHVEAREIWVRRVSLVDGKEVTGGIDKYTLRKFVRSNQGTCYNQRPNVAEGDRVVKGEILGNGPSMDSGELALGRNVLVAFMTWDGYNYEDAIIMSERLVKDDVYTSIHIEEFESEARDTKLGPEEMTRDIPNVGEDALRDLDERGIIRVGAEVKDNDLLVGKVTPKGVTELTAEERLLHAIFGEKAREVRDTSLRVPHGGGGIVLDVKIFTREAGDELPPGVNQLVRVYIVQKRKIHEGDKMAGRHGNKGVISRILPEEDMPFMPDGTPVDIMLNPLGVPSRMNIGQVLELHLGMAARALGIHVATPVFDGANEEDVWSTVEEAGMARDAKTVLYDGRSGEAFDNRISVGVMYMIKLAHMVDDKLHARSTGPYSLVTQQPLGGKAQFGGQRFGEMEVWALEAYGAAYTLQEILTIKSDDVVGRVKTYEAIVKGESVPEPGVPESFKVLIKELQSLGMDVKMLSADEEEIEMRDMDDDDFTNQNDAFNIVQPENAATEKTE.

The disordered stretch occupies residues 1160-1184 (DDDFTNQNDAFNIVQPENAATEKTE).

Belongs to the RNA polymerase beta chain family. In terms of assembly, the RNAP catalytic core consists of 2 alpha, 1 beta, 1 beta' and 1 omega subunit. When a sigma factor is associated with the core the holoenzyme is formed, which can initiate transcription.

It catalyses the reaction RNA(n) + a ribonucleoside 5'-triphosphate = RNA(n+1) + diphosphate. Its function is as follows. DNA-dependent RNA polymerase catalyzes the transcription of DNA into RNA using the four ribonucleoside triphosphates as substrates. In Listeria innocua serovar 6a (strain ATCC BAA-680 / CLIP 11262), this protein is DNA-directed RNA polymerase subunit beta.